The sequence spans 160 residues: Allophycocyanin alpha chain (160 aa).

An N4-methylasparagine modification is found at asparagine 70. Cysteine 80 is a (2R,3E)-phycocyanobilin binding site.

The protein belongs to the phycobiliprotein family. As to quaternary structure, component of the phycobilisome. Heterodimer of an alpha and a beta chain. In terms of processing, contains one covalently linked phycocyanobilin chromophore.

The protein resides in the cellular thylakoid membrane. Functionally, light-harvesting photosynthetic bile pigment-protein from the phycobiliprotein complex. Allophycocyanin has a maximum absorption at approximately 650 nanometers. The protein is Allophycocyanin alpha chain (apcA) of Mastigocladus laminosus (Fischerella sp.).